Consider the following 481-residue polypeptide: Autolysin (481 aa).

One can recognise a Peptidase C51 domain in the interval 7-142; sequence KNEFIERLKT…LQDDNMLMIS (136 aa). The N-acetylmuramoyl-L-alanine amidase domain maps to 198 to 323; it reads SNPKGIVIHN…NEFTSTSCPH (126 aa). In terms of domain architecture, SH3b spans 398 to 466; it reads EESARFTNGN…YLPIRTWNGS (69 aa).

The protein belongs to the N-acetylmuramoyl-L-alanine amidase 2 family.

The protein localises to the secreted. It carries out the reaction Hydrolyzes the link between N-acetylmuramoyl residues and L-amino acid residues in certain cell-wall glycopeptides.. Autolysins are involved in some important biological processes such as cell separation, cell-wall turnover, competence for genetic transformation, formation of the flagella and sporulation. Autolysin strictly depends on the presence of choline-containing cell walls for activity. This Staphylococcus aureus protein is Autolysin (lytA).